The primary structure comprises 263 residues: Isoprenyl transferase (263 aa).

D26 is an active-site residue. Mg(2+) is bound at residue D26. Substrate contacts are provided by residues 27–30, W31, R39, H43, and 71–73; these read GNGR and SSE. N74 serves as the catalytic Proton acceptor. Residues W75, R77, R191, and 197–199 contribute to the substrate site; that span reads RIS. E210 is a binding site for Mg(2+). Residues 241 to 263 are disordered; sequence GRTSEQIAGQQENKNTVSNEDRV. The segment covering 243–263 has biased composition (polar residues); that stretch reads TSEQIAGQQENKNTVSNEDRV.

It belongs to the UPP synthase family. As to quaternary structure, homodimer. It depends on Mg(2+) as a cofactor.

Catalyzes the condensation of isopentenyl diphosphate (IPP) with allylic pyrophosphates generating different type of terpenoids. In Nitrosomonas europaea (strain ATCC 19718 / CIP 103999 / KCTC 2705 / NBRC 14298), this protein is Isoprenyl transferase.